The sequence spans 354 residues: Anthranilate phosphoribosyltransferase (354 aa).

The protein belongs to the anthranilate phosphoribosyltransferase family.

It catalyses the reaction N-(5-phospho-beta-D-ribosyl)anthranilate + diphosphate = 5-phospho-alpha-D-ribose 1-diphosphate + anthranilate. Its pathway is amino-acid biosynthesis; L-tryptophan biosynthesis; L-tryptophan from chorismate: step 2/5. The sequence is that of Anthranilate phosphoribosyltransferase (trp4) from Schizosaccharomyces pombe (strain 972 / ATCC 24843) (Fission yeast).